The following is a 344-amino-acid chain: GTP 3',8-cyclase (344 aa).

The Radical SAM core domain occupies 19 to 245; it reads PFGRAVTYLR…DIPYRTGGPA (227 aa). Arg-28 contributes to the GTP binding site. Positions 35 and 39 each coordinate [4Fe-4S] cluster. Tyr-41 provides a ligand contact to S-adenosyl-L-methionine. Cys-42 contacts [4Fe-4S] cluster. Arg-77 contacts GTP. S-adenosyl-L-methionine is bound at residue Gly-81. Residue Thr-111 participates in GTP binding. Ser-135 provides a ligand contact to S-adenosyl-L-methionine. GTP is bound at residue Lys-171. An S-adenosyl-L-methionine-binding site is contributed by Met-205. [4Fe-4S] cluster contacts are provided by Cys-268 and Cys-271. GTP is bound at residue 273-275; sequence RVR. Cys-285 is a binding site for [4Fe-4S] cluster.

It belongs to the radical SAM superfamily. MoaA family. Monomer and homodimer. It depends on [4Fe-4S] cluster as a cofactor.

It catalyses the reaction GTP + AH2 + S-adenosyl-L-methionine = (8S)-3',8-cyclo-7,8-dihydroguanosine 5'-triphosphate + 5'-deoxyadenosine + L-methionine + A + H(+). Its pathway is cofactor biosynthesis; molybdopterin biosynthesis. Functionally, catalyzes the cyclization of GTP to (8S)-3',8-cyclo-7,8-dihydroguanosine 5'-triphosphate. The sequence is that of GTP 3',8-cyclase from Brucella ovis (strain ATCC 25840 / 63/290 / NCTC 10512).